The chain runs to 99 residues: uncharacterized protein (99 aa).

The protein belongs to the ycf15 family.

Its subcellular location is the plastid. The protein localises to the chloroplast. This is an uncharacterized protein from Saccharum hybrid (Sugarcane).